The primary structure comprises 509 residues: Metal transporter Nramp3 (509 aa).

Low complexity predominate over residues Met1–Ile12. A disordered region spans residues Met1–Thr25. The segment covering Asn13–Asp23 has biased composition (acidic residues). Helical transmembrane passes span Leu56–Leu76, Ala84–Val104, Met133–Gly153, Ile165–Leu185, Leu193–Gly213, Ala239–Val259, Ile285–Phe305, Tyr327–Gln347, Ile383–Leu403, Trp406–Val426, Ile444–Phe464, and Val472–Ile492.

Belongs to the NRAMP (TC 2.A.55) family. As to expression, expressed in vascular tissues.

The protein resides in the vacuole membrane. Vacuolar metal transporter involved in intracellular metal homeostasis. Can transport iron (Fe), manganese (Mn) and cadmium (Cd). Regulates metal accumulation under Fe starvation. Acts redundantly with NRAMP4 to mobilize vacuolar Fe and provide sufficient Fe during seed germination. In association with NRAMP4, required for optimal growth and photosynthesis under Mn deficiency. Exports Mn from vacuoles in leaf mesophyll cells, making Mn available for functional photosystem II in chloroplasts. Involved in basal resistance to the bacterial pathogen E.chrysanthemi. This is Metal transporter Nramp3 (NRAMP3) from Arabidopsis thaliana (Mouse-ear cress).